The primary structure comprises 259 residues: MSSSFLSRPLVSVYVFAMVTMQLLFMQSVLSLNQTNAYLNHICIKGEGIVKGSSYEGSVKSVIDHMSTYLDYGFVNGAGSDGPTNIYAKLQCRADASESKCRSCLATAFSEIRKKCPNYKGRIIWYDNCLLDISSIYTLAEIDYRHIFNMYNAKDVSSDTMAFNKNTRALLYALKEKAISKKELPYRRDYLYSAGEESLGKKKVYAMVQCTKDLSAKNCSVCLSYILSKLPKCCKGKQGGSVLSPSCNFRYELYPFVKT.

The first 31 residues, 1-31 (MSSSFLSRPLVSVYVFAMVTMQLLFMQSVLS), serve as a signal peptide directing secretion. 2 consecutive Gnk2-homologous domains span residues 37–138 (AYLN…SIYT) and 144–256 (YRHI…LYPF).

The protein belongs to the cysteine-rich repeat secretory protein family.

It is found in the secreted. This is Putative cysteine-rich repeat secretory protein 25 (CRRSP25) from Arabidopsis thaliana (Mouse-ear cress).